An 893-amino-acid chain; its full sequence is Alanine--tRNA ligase (893 aa).

Zn(2+) contacts are provided by His575, His579, Cys677, and His681.

The protein belongs to the class-II aminoacyl-tRNA synthetase family. Zn(2+) serves as cofactor.

It localises to the cytoplasm. The enzyme catalyses tRNA(Ala) + L-alanine + ATP = L-alanyl-tRNA(Ala) + AMP + diphosphate. Functionally, catalyzes the attachment of alanine to tRNA(Ala) in a two-step reaction: alanine is first activated by ATP to form Ala-AMP and then transferred to the acceptor end of tRNA(Ala). Also edits incorrectly charged Ser-tRNA(Ala) and Gly-tRNA(Ala) via its editing domain. In Synechococcus sp. (strain CC9311), this protein is Alanine--tRNA ligase.